Consider the following 69-residue polypeptide: NSVHPCCDPVTCKPKRGKHCASGPCCENCYIVGVGTVCNPARGDWNDDNCTGVSSDCPPNPWNGKPSDN.

The region spanning 1–65 (NSVHPCCDPV…DCPPNPWNGK (65 aa)) is the Disintegrin domain. Cystine bridges form between C6/C29, C20/C26, C25/C50, and C38/C57. The short motif at 42 to 44 (RGD) is the Cell attachment site element.

This sequence belongs to the venom metalloproteinase (M12B) family. P-II subfamily. P-IIe sub-subfamily. As to quaternary structure, heterodimer with subunit alpha; disulfide-linked. In terms of tissue distribution, expressed by the venom gland.

The protein localises to the secreted. In terms of biological role, potently inhibits adhesion of alpha-4/beta-1 (ITGA4/ITGB1) and alpha-9/beta-1 (ITGA9/ITGB1) integrins to VCAM1, and adhesion of alpha-5/beta-1 (ITGA5/ITGB1) integrin to fibronectin. Has a much less effect on alpha-IIb/beta-3 (ITGA2B/ITGB3) integrin. Also potently inhibits neutrophil migration across TNF-alpha-activated human umbilical endothelial cells. In Echis carinatus sochureki (Saw-scaled viper), this protein is Disintegrin EC6 subunit beta.